Reading from the N-terminus, the 178-residue chain is MQFLKKNKPLFGIVTLALACATAQAQPTQGGVSLHYGIGDHYQRVTLNYETPTLWSHQFGGNWGRLDLTPELGASYWWADGSRSPGHVWQASAIPMFRWWTGERFYIEAGIGATVFSSTSFADKRIGSAFQFGDHIGLGFLLTPSNRIGLRYSHFSNAGIKEPNPGLDIVQLTYTYQF.

Residues 1-19 form the signal peptide; sequence MQFLKKNKPLFGIVTLALA. Active-site charge relay system residues include histidine 154, serine 156, and aspartate 168.

This sequence belongs to the PagL family. Homodimer.

Its subcellular location is the cell outer membrane. The catalysed reaction is a 3-(acyloxy)acyl derivative of bacterial toxin + H2O = a 3-hydroxyacyl derivative of bacterial toxin + a fatty acid + H(+). Functionally, has lipid A 3-O-deacylase activity. Hydrolyzes the ester bond at the 3 position of lipid A, a bioactive component of lipopolysaccharide (LPS), thereby releasing the primary fatty acyl moiety. This chain is Lipid A deacylase PagL, found in Bordetella bronchiseptica (strain ATCC BAA-588 / NCTC 13252 / RB50) (Alcaligenes bronchisepticus).